The sequence spans 974 residues: Toxin subunit YenC1 (974 aa).

RHS repeat units lie at residues 165 to 179, 290 to 304, 322 to 336, 354 to 368, 398 to 412, 490 to 504, 570 to 584, 596 to 610, and 630 to 644; these read AGQC…GLNQ, GVLT…TQRL, FQDL…GNVL, VPEN…YQLV, NYIR…GNLM, SDSE…SQRV, NDEL…IGSS, SQEE…AVWM, and DATG…YYQP. The RHS-repeat associated core domain stretch occupies residues 600–680; that stretch reads YYPYGGTAVW…PIVLHDPDGL (81 aa). The interval 699 to 940 is cytotoxic necrotising factor domain; sequence ISSLKGTGPF…GEVSASTLLE (242 aa).

It belongs to the RHS family. As to quaternary structure, semipurified toxin complex consists of at least YenA1-YenA2-YenB-YenC1-YenC2-Chi1-Chi2. The Yen-TC:K9 subcomplex is about 26 nm tall and 22 nm in diameter with 5-fold symmetry and 5 copies of YenA1, YenA2, Chi1 and Chi2; the chitinase subunits may be solvent accessible on the exterior the complex. The Yen-TC:K9 subcomplex has no insecticidal activity. The native complex with additional YenB, YenC1 and YenC2 subunits is 16 nm taller and is insecticidal; the toxicity-conferring subunits are present at about 1 copy each.

The protein localises to the secreted. With respect to regulation, toxin complex is secreted when grown at 25 degrees Celsius or less; at higher temperatures the proteins are present intracellularly but not secreted. Part of an orally active toxin complex (TC) with strong insecticidal effects on larvae of the Coleoptera Costelytra zealandica, Acrossidius tasmania and Adoryphorus couloni and some Lepidoptera larvae. The TC has an endochitinase activity. In Yersinia entomophaga, this protein is Toxin subunit YenC1.